Consider the following 372-residue polypeptide: Glutamate 5-kinase (372 aa).

An ATP-binding site is contributed by Lys14. Ser54, Asp141, and Asn153 together coordinate substrate. An ATP-binding site is contributed by 173 to 174 (TD). One can recognise a PUA domain in the interval 280–358 (RGTVVIDDGA…SQIESLLGYS (79 aa)).

It belongs to the glutamate 5-kinase family.

It localises to the cytoplasm. It catalyses the reaction L-glutamate + ATP = L-glutamyl 5-phosphate + ADP. Its pathway is amino-acid biosynthesis; L-proline biosynthesis; L-glutamate 5-semialdehyde from L-glutamate: step 1/2. Functionally, catalyzes the transfer of a phosphate group to glutamate to form L-glutamate 5-phosphate. The sequence is that of Glutamate 5-kinase from Methylibium petroleiphilum (strain ATCC BAA-1232 / LMG 22953 / PM1).